Reading from the N-terminus, the 851-residue chain is DNA mismatch repair protein MutS (851 aa).

614 to 621 (GPNMGGKS) contacts ATP.

Belongs to the DNA mismatch repair MutS family.

This protein is involved in the repair of mismatches in DNA. It is possible that it carries out the mismatch recognition step. This protein has a weak ATPase activity. The protein is DNA mismatch repair protein MutS of Serratia proteamaculans (strain 568).